The following is a 369-amino-acid chain: 2-aminoethylphosphonate--pyruvate transaminase (369 aa).

Lys-193 is subject to N6-(pyridoxal phosphate)lysine.

Belongs to the class-V pyridoxal-phosphate-dependent aminotransferase family. PhnW subfamily. Homodimer. Pyridoxal 5'-phosphate is required as a cofactor.

The catalysed reaction is (2-aminoethyl)phosphonate + pyruvate = phosphonoacetaldehyde + L-alanine. Its function is as follows. Involved in phosphonate degradation. This Burkholderia pseudomallei (strain 1106a) protein is 2-aminoethylphosphonate--pyruvate transaminase.